We begin with the raw amino-acid sequence, 434 residues long: GTPase Der (434 aa).

EngA-type G domains lie at 3–167 (NIVA…PEIE) and 175–350 (PRFA…ESRS). GTP contacts are provided by residues 9-16 (GRPNVGKS), 56-60 (DTGGY), 119-122 (NKVD), 181-188 (GRPNAGKS), 228-232 (DTAGI), and 293-296 (NKWD). In terms of domain architecture, KH-like spans 351 to 434 (KKIKTRQFND…VPISIFFRKK (84 aa)).

The protein belongs to the TRAFAC class TrmE-Era-EngA-EngB-Septin-like GTPase superfamily. EngA (Der) GTPase family. In terms of assembly, associates with the 50S ribosomal subunit.

GTPase that plays an essential role in the late steps of ribosome biogenesis. The sequence is that of GTPase Der from Christiangramia forsetii (strain DSM 17595 / CGMCC 1.15422 / KT0803) (Gramella forsetii).